The chain runs to 226 residues: Cytidylate kinase (226 aa).

11–19 lines the ATP pocket; that stretch reads GPAGAGKST.

It belongs to the cytidylate kinase family. Type 1 subfamily.

It localises to the cytoplasm. It catalyses the reaction CMP + ATP = CDP + ADP. The catalysed reaction is dCMP + ATP = dCDP + ADP. The protein is Cytidylate kinase of Pelotomaculum thermopropionicum (strain DSM 13744 / JCM 10971 / SI).